We begin with the raw amino-acid sequence, 239 residues long: Serine protease SplF (239 aa).

Residues 1–36 form the signal peptide; it reads MNKNIIIKSIAALTILTSVTGVGTTMVEGIQQTAKA. Residues His-75, Asp-114, and Ser-192 each act as charge relay system in the active site.

Belongs to the peptidase S1B family.

The protein resides in the secreted. This is Serine protease SplF (splF) from Staphylococcus aureus (strain Mu50 / ATCC 700699).